A 199-amino-acid polypeptide reads, in one-letter code: Photosystem I reaction center subunit XI (199 aa).

A run of 2 helical transmembrane segments spans residues 108-128 and 165-185; these read LTAG…LLVL and FWLG…TLHL.

The protein belongs to the PsaL family.

The protein localises to the cellular thylakoid membrane. The protein is Photosystem I reaction center subunit XI of Prochlorococcus marinus (strain AS9601).